A 425-amino-acid chain; its full sequence is Trigger factor (425 aa).

The 74-residue stretch at 158-231 (GDLVRVNMEV…VEEVYKRTLP (74 aa)) folds into the PPIase FKBP-type domain.

The protein belongs to the FKBP-type PPIase family. Tig subfamily.

Its subcellular location is the cytoplasm. It carries out the reaction [protein]-peptidylproline (omega=180) = [protein]-peptidylproline (omega=0). Functionally, involved in protein export. Acts as a chaperone by maintaining the newly synthesized protein in an open conformation. Functions as a peptidyl-prolyl cis-trans isomerase. The polypeptide is Trigger factor (tig) (Thermotoga maritima (strain ATCC 43589 / DSM 3109 / JCM 10099 / NBRC 100826 / MSB8)).